The primary structure comprises 123 residues: Small ribosomal subunit protein uS12c (123 aa).

The span at 1–16 (MPTIQQLIRNSRQPAE) shows a compositional bias: polar residues. The tract at residues 1-23 (MPTIQQLIRNSRQPAENRTKSPA) is disordered.

It belongs to the universal ribosomal protein uS12 family. As to quaternary structure, part of the 30S ribosomal subunit.

Its subcellular location is the plastid. The protein resides in the chloroplast. Its function is as follows. With S4 and S5 plays an important role in translational accuracy. Located at the interface of the 30S and 50S subunits. In Staurastrum punctulatum (Green alga), this protein is Small ribosomal subunit protein uS12c (rps12).